Reading from the N-terminus, the 215-residue chain is uncharacterized protein (215 aa).

It localises to the mitochondrion. This is an uncharacterized protein from Arabidopsis thaliana (Mouse-ear cress).